The chain runs to 178 residues: Protein GrpE (178 aa).

A compositionally biased stretch (polar residues) spans 1–11 (MENTQENPTDQ). The disordered stretch occupies residues 1–31 (MENTQENPTDQTTEETGREAQAAENAAPAAE). The segment covering 19-31 (EAQAAENAAPAAE) has biased composition (low complexity).

The protein belongs to the GrpE family. Homodimer.

The protein localises to the cytoplasm. Functionally, participates actively in the response to hyperosmotic and heat shock by preventing the aggregation of stress-denatured proteins, in association with DnaK and GrpE. It is the nucleotide exchange factor for DnaK and may function as a thermosensor. Unfolded proteins bind initially to DnaJ; upon interaction with the DnaJ-bound protein, DnaK hydrolyzes its bound ATP, resulting in the formation of a stable complex. GrpE releases ADP from DnaK; ATP binding to DnaK triggers the release of the substrate protein, thus completing the reaction cycle. Several rounds of ATP-dependent interactions between DnaJ, DnaK and GrpE are required for fully efficient folding. The chain is Protein GrpE from Burkholderia thailandensis (strain ATCC 700388 / DSM 13276 / CCUG 48851 / CIP 106301 / E264).